Here is a 469-residue protein sequence, read N- to C-terminus: MSAPRTLYDKIWDDHLVDEQADGTCLLYIDRHLVHEVTSPQAFEGLRMSGRKVRAPEKTLAVVDHNVPTSPDRHLGIKNEESRIQVEQLAKNAAEFNVEYYSENDKRQGIVHIIGPEQGFTLPGMTIVCGDSHTSTHGAFGSLAHGIGTSEVEHVLATQTLIQKKAKNMLVQVDGQLPAGVTAKDIVLAIIGEIGTAGGTGYVIEYAGEAIRSLSMEGRMTICNMSIEGGARAGLIAPDEITFEYIKGKPRAPKGEALEQAIAYWKTLKSDEGAHFDRIVKLNAAELPPIVSWGSSPEDVVSVQGIVPNPDEIQDETKRASKWRALDYMGLKPGTKMTDIAVDRVFIGSCTNGRIEDLRAAAKVVEGKTVASTVNAMIVPGSGLVKEQAEAEGLDKIFKAAGFDWREPGCSMCLAMNDDRLKPGERCASTSNRNFEGRQGFKGRTHLVSPTMAAAAAIAGHFVDIREWN.

Residues C350, C410, and C413 each contribute to the [4Fe-4S] cluster site.

Belongs to the aconitase/IPM isomerase family. LeuC type 1 subfamily. In terms of assembly, heterodimer of LeuC and LeuD. It depends on [4Fe-4S] cluster as a cofactor.

The catalysed reaction is (2R,3S)-3-isopropylmalate = (2S)-2-isopropylmalate. It functions in the pathway amino-acid biosynthesis; L-leucine biosynthesis; L-leucine from 3-methyl-2-oxobutanoate: step 2/4. Catalyzes the isomerization between 2-isopropylmalate and 3-isopropylmalate, via the formation of 2-isopropylmaleate. The chain is 3-isopropylmalate dehydratase large subunit from Rhizobium etli (strain ATCC 51251 / DSM 11541 / JCM 21823 / NBRC 15573 / CFN 42).